The following is a 386-amino-acid chain: Homoserine O-succinyltransferase (386 aa).

In terms of domain architecture, AB hydrolase-1 spans 49–358; the sequence is NAILICHALS…DAEQGHDSFL (310 aa). Ser-156 (nucleophile) is an active-site residue. Arg-226 provides a ligand contact to substrate. Residues Asp-321 and His-354 contribute to the active site. Asp-355 lines the substrate pocket.

It belongs to the AB hydrolase superfamily. MetX family. As to quaternary structure, homodimer.

The protein resides in the cytoplasm. It carries out the reaction L-homoserine + succinyl-CoA = O-succinyl-L-homoserine + CoA. The protein operates within amino-acid biosynthesis; L-methionine biosynthesis via de novo pathway; O-succinyl-L-homoserine from L-homoserine: step 1/1. Transfers a succinyl group from succinyl-CoA to L-homoserine, forming succinyl-L-homoserine. This Acinetobacter baumannii (strain ACICU) protein is Homoserine O-succinyltransferase.